A 166-amino-acid polypeptide reads, in one-letter code: Small ribosomal subunit protein uS4 (166 aa).

Positions 102-164 constitute an S4 RNA-binding domain; sequence RRLQTIVWRK…HPSCLEVEKE (63 aa).

Belongs to the universal ribosomal protein uS4 family. Part of the 30S ribosomal subunit. Contacts protein S5. The interaction surface between S4 and S5 is involved in control of translational fidelity.

In terms of biological role, one of the primary rRNA binding proteins, it binds directly to 16S rRNA where it nucleates assembly of the body of the 30S subunit. With S5 and S12 plays an important role in translational accuracy. The chain is Small ribosomal subunit protein uS4 from Korarchaeum cryptofilum (strain OPF8).